Here is a 420-residue protein sequence, read N- to C-terminus: Multiple sugar-binding protein (420 aa).

The N-terminal stretch at 1 to 22 (MKWYKKIGLLGIVGLTSVLLAA) is a signal peptide. The N-palmitoyl cysteine moiety is linked to residue C23. C23 carries the S-diacylglycerol cysteine lipid modification.

This sequence belongs to the bacterial solute-binding protein 1 family.

The protein resides in the cell membrane. Its function is as follows. Involved in a binding protein-dependent transport system responsible for the uptake of melibiose, raffinose and isomaltotriose. This Streptococcus mutans serotype c (strain ATCC 700610 / UA159) protein is Multiple sugar-binding protein.